Consider the following 891-residue polypeptide: Major core protein OPG136 precursor (891 aa).

Positions 615-697 (SPEGEETIIC…ILDRIITNAG (83 aa)) are excised as a propeptide.

This sequence belongs to the orthopxvirus protein OPG136 family. Interacts with P39/A4. In terms of processing, the precursor is cleaved by OPG083 to give rise to the 62 kDa mature protein during virion maturation. Proteolytic cleavage of major core proteins OPG136, OPG129, and OPG098, which occurs at a late stage of core formation, is required for production of infectious mature virions (MV).

It is found in the virion. Core protein 4a is the most abundant virion protein. Major component of the virion core that undergoes proteolytic processing during the immature virion (IV) to mature virion (MV) transition. The sequence is that of Major core protein OPG136 precursor (OPG136) from Cynomys gunnisoni (Gunnison's prairie dog).